The chain runs to 92 residues: Large ribosomal subunit protein uL23 (92 aa).

It belongs to the universal ribosomal protein uL23 family. Part of the 50S ribosomal subunit. Contacts protein L29, and trigger factor when it is bound to the ribosome.

Functionally, one of the early assembly proteins it binds 23S rRNA. One of the proteins that surrounds the polypeptide exit tunnel on the outside of the ribosome. Forms the main docking site for trigger factor binding to the ribosome. The protein is Large ribosomal subunit protein uL23 of Bdellovibrio bacteriovorus (strain ATCC 15356 / DSM 50701 / NCIMB 9529 / HD100).